The following is a 365-amino-acid chain: Magnesium-chelatase subunit ChlI homolog (365 aa).

40 to 47 (EKGTAKST) contributes to the ATP binding site. The segment at 340–365 (FKQQNNKDNEEKEEHKDDDVKKNMMK) is disordered. Residues 344-365 (NNKDNEEKEEHKDDDVKKNMMK) are compositionally biased toward basic and acidic residues.

This sequence belongs to the Mg-chelatase subunits D/I family.

The sequence is that of Magnesium-chelatase subunit ChlI homolog from Methanocaldococcus jannaschii (strain ATCC 43067 / DSM 2661 / JAL-1 / JCM 10045 / NBRC 100440) (Methanococcus jannaschii).